Here is a 425-residue protein sequence, read N- to C-terminus: tRNA(Ile)-lysidine synthase (425 aa).

27–32 (SGGLDS) is a binding site for ATP.

The protein belongs to the tRNA(Ile)-lysidine synthase family.

It is found in the cytoplasm. It catalyses the reaction cytidine(34) in tRNA(Ile2) + L-lysine + ATP = lysidine(34) in tRNA(Ile2) + AMP + diphosphate + H(+). Functionally, ligates lysine onto the cytidine present at position 34 of the AUA codon-specific tRNA(Ile) that contains the anticodon CAU, in an ATP-dependent manner. Cytidine is converted to lysidine, thus changing the amino acid specificity of the tRNA from methionine to isoleucine. This is tRNA(Ile)-lysidine synthase from Streptococcus pneumoniae (strain Taiwan19F-14).